A 446-amino-acid polypeptide reads, in one-letter code: Xylose isomerase 2 (446 aa).

Residues His109 and Asp112 contribute to the active site. Mg(2+) contacts are provided by Glu240, Glu276, His279, Asp304, Asp315, Asp317, and Asp347.

The protein belongs to the xylose isomerase family. In terms of assembly, homotetramer. Requires Mg(2+) as cofactor.

It localises to the cytoplasm. It carries out the reaction alpha-D-xylose = alpha-D-xylulofuranose. This chain is Xylose isomerase 2, found in Xanthomonas campestris pv. campestris (strain 8004).